We begin with the raw amino-acid sequence, 187 residues long: Accessory gene regulator protein B (187 aa).

Helical transmembrane passes span 49–69, 82–102, 106–126, 144–164, and 166–186; these read ISIFLSVFLYTLVTHLSYMLI, ILCYIQSILIFVFVPYFLINI, FTYLLALSIIGLISVVIYAPA, VSIIMYLLVMILSLIIHPFYA, and FMLLGILVESITLLPIFFPKE.

The protein belongs to the AgrB family.

It localises to the cell membrane. Essential for the production of a quorum sensing system signal molecule, the autoinducing peptide (AIP). This quorum sensing system is responsible for the regulation of the expression of virulence factor genes. Involved in the proteolytic processing of AgrD, the precursor of AIP. The polypeptide is Accessory gene regulator protein B (Staphylococcus aureus (strain bovine RF122 / ET3-1)).